A 445-amino-acid chain; its full sequence is Tubulin alpha-1 chain (445 aa).

Q11 contributes to the GTP binding site. K40 carries the N6-acetyllysine modification. Residues E71, S140, G144, T145, T179, N206, and N228 each coordinate GTP. E71 is a Mg(2+) binding site. The active site involves E254.

The protein belongs to the tubulin family. As to quaternary structure, dimer of alpha and beta chains. A typical microtubule is a hollow water-filled tube with an outer diameter of 25 nm and an inner diameter of 15 nM. Alpha-beta heterodimers associate head-to-tail to form protofilaments running lengthwise along the microtubule wall with the beta-tubulin subunit facing the microtubule plus end conferring a structural polarity. Microtubules usually have 13 protofilaments but different protofilament numbers can be found in some organisms and specialized cells. Mg(2+) serves as cofactor. Post-translationally, acetylation of alpha chains at Lys-40 stabilizes microtubules and affects affinity and processivity of microtubule motors. This modification has a role in multiple cellular functions, ranging from cell motility, cell cycle progression or cell differentiation to intracellular trafficking and signaling.

The protein resides in the cytoplasm. The protein localises to the cytoskeleton. It catalyses the reaction GTP + H2O = GDP + phosphate + H(+). Its function is as follows. Tubulin is the major constituent of microtubules, a cylinder consisting of laterally associated linear protofilaments composed of alpha- and beta-tubulin heterodimers. Microtubules grow by the addition of GTP-tubulin dimers to the microtubule end, where a stabilizing cap forms. Below the cap, tubulin dimers are in GDP-bound state, owing to GTPase activity of alpha-tubulin. In Stylonychia lemnae (Ciliate), this protein is Tubulin alpha-1 chain.